The sequence spans 179 residues: Large ribosomal subunit protein uL5 (179 aa).

This sequence belongs to the universal ribosomal protein uL5 family. In terms of assembly, part of the 50S ribosomal subunit; part of the 5S rRNA/L5/L18/L25 subcomplex. Contacts the 5S rRNA and the P site tRNA. Forms a bridge to the 30S subunit in the 70S ribosome.

This is one of the proteins that bind and probably mediate the attachment of the 5S RNA into the large ribosomal subunit, where it forms part of the central protuberance. In the 70S ribosome it contacts protein S13 of the 30S subunit (bridge B1b), connecting the 2 subunits; this bridge is implicated in subunit movement. Contacts the P site tRNA; the 5S rRNA and some of its associated proteins might help stabilize positioning of ribosome-bound tRNAs. The protein is Large ribosomal subunit protein uL5 of Citrifermentans bemidjiense (strain ATCC BAA-1014 / DSM 16622 / JCM 12645 / Bem) (Geobacter bemidjiensis).